The sequence spans 421 residues: ATP-dependent RNA helicase RhlB (421 aa).

The Q motif signature appears at 9–37 (QKFSDFALHPAVIEALEKKGFHNCTPIQA). Residues 40–219 (LPLTLEGRDV…FEQMNNAEYV (180 aa)) enclose the Helicase ATP-binding domain. Position 53-60 (53-60 (AQTGTGKT)) interacts with ATP. The DEAD box motif lies at 165–168 (DEAD). The Helicase C-terminal domain maps to 245–390 (RLLQTLLEEE…VSKYNPDALM (146 aa)). The tract at residues 396–421 (PLRLTRARPGNGPRRNGPPRNRRRSG) is disordered. Over residues 403-414 (RPGNGPRRNGPP) the composition is skewed to low complexity.

The protein belongs to the DEAD box helicase family. RhlB subfamily. As to quaternary structure, component of the RNA degradosome, which is a multiprotein complex involved in RNA processing and mRNA degradation.

The protein localises to the cytoplasm. The enzyme catalyses ATP + H2O = ADP + phosphate + H(+). Its function is as follows. DEAD-box RNA helicase involved in RNA degradation. Has RNA-dependent ATPase activity and unwinds double-stranded RNA. The polypeptide is ATP-dependent RNA helicase RhlB (Klebsiella pneumoniae subsp. pneumoniae (strain ATCC 700721 / MGH 78578)).